A 207-amino-acid chain; its full sequence is Outer-membrane lipoprotein LolB (207 aa).

Residues 1 to 21 (MPMRKRHFYRLLPLASLLLAA) form the signal peptide. Residue Cys22 is the site of N-palmitoyl cysteine attachment. Cys22 carries the S-diacylglycerol cysteine lipid modification.

Belongs to the LolB family. Monomer.

It localises to the cell outer membrane. Functionally, plays a critical role in the incorporation of lipoproteins in the outer membrane after they are released by the LolA protein. The polypeptide is Outer-membrane lipoprotein LolB (Yersinia pseudotuberculosis serotype IB (strain PB1/+)).